Here is a 140-residue protein sequence, read N- to C-terminus: PDZ domain-containing protein 11 (140 aa).

One can recognise a PDZ domain in the interval 47 to 129; that stretch reads IVTLKKPPGA…ISMRVRFFPY (83 aa).

In terms of assembly, interacts with ATP2B1, ATP2B2, ATP2B3, ATP2B4 and ATP7A. Interacts with PLEKHA7 (via WW domains) at zonula adherens; this interaction is essential for the interaction between PLEKHA7 and the ADAM10-binding protein TSPAN33. Interacts with SLC5A6.

The protein localises to the cytoplasm. The protein resides in the cell junction. It is found in the adherens junction. Its subcellular location is the cell membrane. Mediates docking of ADAM10 to zonula adherens by interacting with PLEKHA7 which is required for PLEKHA7 to interact with the ADAM10-binding protein TSPAN33. In Bos taurus (Bovine), this protein is PDZ domain-containing protein 11 (PDZD11).